The sequence spans 766 residues: Ent-copalyl diphosphate synthase 3 (766 aa).

The N-terminal 30 residues, 1 to 30 (FRSTAAGRCLPVTCCVFPRHFRVSSSSILP), are a transit peptide targeting the chloroplast. K222 is a binding site for substrate. Positions 354 and 356 each coordinate Mg(2+). Positions 354-357 (DVDD) match the DXDD motif motif. K440 is a binding site for substrate.

Belongs to the terpene synthase family. Tpsc subfamily. Mg(2+) serves as cofactor. In terms of tissue distribution, accumulates in leaves, and, at low levels, in germinating seeds.

The protein localises to the plastid. Its subcellular location is the chloroplast. The catalysed reaction is (2E,6E,10E)-geranylgeranyl diphosphate = ent-copalyl diphosphate. It functions in the pathway plant hormone biosynthesis; gibberellin biosynthesis. The protein operates within secondary metabolite biosynthesis; terpenoid biosynthesis. Its function is as follows. Involved in the biosynthesis of ent-kaurene diterpenoids natural products such as oridonin, miltiradiene, eriocalyxin B and nezukol, known to exhibit antitumor, anti-inflammatory and antibacterial activities, and in the production of gibberellins phytohormones. Catalyzes the conversion of (2E,6E,10E)-geranylgeranyl diphosphate (GGPP) to ent-copalyl diphosphate (ent-CPP). This chain is Ent-copalyl diphosphate synthase 3, found in Isodon eriocalyx (Plectranthus eriocalyx).